The chain runs to 140 residues: Class I hydrophobin C (140 aa).

A signal peptide spans M1–A23. 4 cysteine pairs are disulfide-bonded: C41/C114, C49/C108, C50/C85, and C115/C133.

Belongs to the fungal hydrophobin family.

Its subcellular location is the secreted. The protein localises to the cell wall. Its function is as follows. Aerial growth, conidiation, and dispersal of filamentous fungi in the environment rely upon a capability of their secreting small amphipathic proteins called hydrophobins (HPBs) with low sequence identity. Class I can self-assemble into an outermost layer of rodlet bundles on aerial cell surfaces, conferring cellular hydrophobicity that supports fungal growth, development and dispersal; whereas Class II form highly ordered films at water-air interfaces through intermolecular interactions but contribute nothing to the rodlet structure. In P.expansum, hydrophobins contribute to germination, tolerance to cold stress and mycotoxins patulin and citrinin production. HfbC is involved in the virulence on apple. This is Class I hydrophobin C from Penicillium expansum (Blue mold rot fungus).